A 355-amino-acid polypeptide reads, in one-letter code: Probable dual-specificity RNA methyltransferase RlmN (355 aa).

Catalysis depends on glutamate 89, which acts as the Proton acceptor. A Radical SAM core domain is found at tyrosine 95 to arginine 322. Cysteine 102 and cysteine 333 are joined by a disulfide. Cysteine 109, cysteine 113, and cysteine 116 together coordinate [4Fe-4S] cluster. S-adenosyl-L-methionine-binding positions include glycine 159 to glutamate 160, serine 191, serine 214 to histidine 216, and asparagine 290. The active-site S-methylcysteine intermediate is the cysteine 333.

Belongs to the radical SAM superfamily. RlmN family. [4Fe-4S] cluster is required as a cofactor.

It is found in the cytoplasm. It carries out the reaction adenosine(2503) in 23S rRNA + 2 reduced [2Fe-2S]-[ferredoxin] + 2 S-adenosyl-L-methionine = 2-methyladenosine(2503) in 23S rRNA + 5'-deoxyadenosine + L-methionine + 2 oxidized [2Fe-2S]-[ferredoxin] + S-adenosyl-L-homocysteine. The enzyme catalyses adenosine(37) in tRNA + 2 reduced [2Fe-2S]-[ferredoxin] + 2 S-adenosyl-L-methionine = 2-methyladenosine(37) in tRNA + 5'-deoxyadenosine + L-methionine + 2 oxidized [2Fe-2S]-[ferredoxin] + S-adenosyl-L-homocysteine. Specifically methylates position 2 of adenine 2503 in 23S rRNA and position 2 of adenine 37 in tRNAs. The chain is Probable dual-specificity RNA methyltransferase RlmN from Thermus thermophilus (strain ATCC BAA-163 / DSM 7039 / HB27).